Reading from the N-terminus, the 309-residue chain is MEFKHISVLLEETIDSLNIKEDGVYVDCTLGGGGHSKEILKKLSHKGKLIGIDQDTSAIKAAKERLKDYENVIYVHNNFYNIDSILEELDIDKVDGIIMDLGVSSYQLDEASRGFSYMKDAPLDMRMNREENLSAYGVINNYEEEELFKILKNYGEEKFSRKIARFIVEKRTENPIETTGELVEIIRKAIPAKFQREGHPAKRTFQAIRIEVNKELQILNKAIEDSVNRLNKDGRLSIITFHSLEDRIVKVKFKELEKPCTCPPSFPICVCGKEPQIKIITKKPIEPSKEEKEINSRSRSAKLRVCRKI.

S-adenosyl-L-methionine is bound by residues 33–35 (GGH), aspartate 53, phenylalanine 79, aspartate 100, and glutamine 107.

It belongs to the methyltransferase superfamily. RsmH family.

The protein resides in the cytoplasm. It catalyses the reaction cytidine(1402) in 16S rRNA + S-adenosyl-L-methionine = N(4)-methylcytidine(1402) in 16S rRNA + S-adenosyl-L-homocysteine + H(+). Functionally, specifically methylates the N4 position of cytidine in position 1402 (C1402) of 16S rRNA. The polypeptide is Ribosomal RNA small subunit methyltransferase H (Clostridium botulinum (strain ATCC 19397 / Type A)).